A 612-amino-acid polypeptide reads, in one-letter code: Methionine--tRNA ligase (612 aa).

A 'HIGH' region motif is present at residues 12-22; the sequence is PYANGPRHIGH. Residues C144, C147, C157, and C160 each contribute to the Zn(2+) site. The 'KMSKS' region signature appears at 348–352; the sequence is KFSSS. S351 is a binding site for ATP.

The protein belongs to the class-I aminoacyl-tRNA synthetase family. MetG type 1 subfamily. As to quaternary structure, monomer. It depends on Zn(2+) as a cofactor.

It is found in the cytoplasm. It carries out the reaction tRNA(Met) + L-methionine + ATP = L-methionyl-tRNA(Met) + AMP + diphosphate. Is required not only for elongation of protein synthesis but also for the initiation of all mRNA translation through initiator tRNA(fMet) aminoacylation. The chain is Methionine--tRNA ligase from Corynebacterium kroppenstedtii (strain DSM 44385 / JCM 11950 / CIP 105744 / CCUG 35717).